We begin with the raw amino-acid sequence, 49 residues long: U1-theraphotoxin-Lp1b (49 aa).

4 disulfides stabilise this stretch: Cys4/Cys17, Cys8/Cys41, Cys22/Cys24, and Cys35/Cys46.

In terms of tissue distribution, expressed by the venom gland.

It is found in the secreted. Its function is as follows. Toxin that causes irreversible contractile paralysis into adult Aedes aegypti resulting in 100% mortality after 24 hours. In Lasiodora parahybana (Brazilian salmon pink birdeater), this protein is U1-theraphotoxin-Lp1b.